The chain runs to 137 residues: Small heat shock protein IbpA (137 aa).

A sHSP domain is found at S28–N137.

This sequence belongs to the small heat shock protein (HSP20) family. Monomer. Forms homomultimers of about 100-150 subunits at optimal growth temperatures. Conformation changes to monomers at high temperatures or high ionic concentrations.

Its subcellular location is the cytoplasm. Functionally, associates with aggregated proteins, together with IbpB, to stabilize and protect them from irreversible denaturation and extensive proteolysis during heat shock and oxidative stress. Aggregated proteins bound to the IbpAB complex are more efficiently refolded and reactivated by the ATP-dependent chaperone systems ClpB and DnaK/DnaJ/GrpE. Its activity is ATP-independent. This Citrobacter koseri (strain ATCC BAA-895 / CDC 4225-83 / SGSC4696) protein is Small heat shock protein IbpA.